The chain runs to 228 residues: Ribonuclease S-4 (228 aa).

The signal sequence occupies residues 1-27 (MGITGMTYMFTMVLSLIVLIFSASTVG). Residue Gln-36 participates in RNA binding. Cys-42 and Cys-49 are oxidised to a cystine. Residue His-60 participates in RNA binding. His-60 serves as the catalytic Proton donor. Cys-75 and Cys-119 are joined by a disulfide. Asn-87 is a glycosylation site (N-linked (GlcNAc) asparagine). Residue 98 to 99 (NV) participates in RNA binding. Asn-101 is a glycosylation site (N-linked (GlcNAc...) asparagine). RNA is bound by residues Phe-108, 111 to 112 (RE), and 115 to 116 (KH). Glu-112 is an active-site residue. The active-site Proton acceptor is His-116. 3 N-linked (GlcNAc...) asparagine glycosylation sites follow: Asn-144, Asn-160, and Asn-175. Disulfide bonds link Cys-183–Cys-222 and Cys-199–Cys-210.

It belongs to the RNase T2 family. In terms of processing, the N-glycans attached at Asn-101, Asn-160 and Asn-175 consist predominantly of disaccharide (GlcNAc-GlcNAc). The N-glycan at 87 is 53% monosaccharide and 47% disaccharide. The N-glycan at Asn-144 contains mannose and xylose.

It is found in the secreted. The protein localises to the extracellular space. It catalyses the reaction a ribonucleotidyl-ribonucleotide-RNA + H2O = a 3'-end 3'-phospho-ribonucleotide-RNA + a 5'-end dephospho-ribonucleoside-RNA + H(+). Functionally, self-incompatibility (SI) is the inherited ability of a flowering plant to prevent self-fertilization by discriminating between self and non-self pollen during pollination. In many species, self-incompatibility is controlled by the single, multiallelic locus S. The sequence is that of Ribonuclease S-4 from Pyrus pyrifolia (Chinese pear).